Here is a 199-residue protein sequence, read N- to C-terminus: Probable GTP-binding protein EngB (199 aa).

Residues 24-197 (EGYEVIFAGR…GARLNTFFGY (174 aa)) enclose the EngB-type G domain. GTP is bound by residues 32 to 39 (GRSNAGKS), 59 to 63 (GKTQH), 77 to 80 (DLPG), 144 to 147 (TKSD), and 176 to 178 (FSS). Positions 39 and 61 each coordinate Mg(2+).

Belongs to the TRAFAC class TrmE-Era-EngA-EngB-Septin-like GTPase superfamily. EngB GTPase family. Requires Mg(2+) as cofactor.

Its function is as follows. Necessary for normal cell division and for the maintenance of normal septation. The chain is Probable GTP-binding protein EngB from Ruthia magnifica subsp. Calyptogena magnifica.